The primary structure comprises 576 residues: MDSVAFEDVSVSFSQEEWALLAPSQKKLYRDVMQETFKNLASIGEKWEDPNVEDQHKNQGRNLRSHTGERLCEGKEGSQCAENFSPNLSVTKKTAGVKPYECTICGKAFMRLSSLTRHMRSHTGYELFEKPYKCKECEKAFSYLKSFQRHERSHTGEKPYKCKQCGKTFIYHQPFQRHERTHIGEKPYECKQCGKALSCSSSLRVHERIHTGEKPYECKQCGKAFSCSSSIRVHERTHTGEKPYACKECGKAFISHTSVLTHMITHNGDRPYKCKECGKAFIFPSFLRVHERIHTGEKPYKCKQCGKAFRCSTSIQIHERIHTGEKPYKCKECGKSFSARPAFRVHVRVHTGEKPYKCKECGKAFSRISYFRIHERTHTGEKPYECKKCGKTFNYPLDLKIHKRNHTGEKPYECKECAKTFISLENFRRHMITHTGDGPYKCRDCGKVFIFPSALRTHERTHTGEKPYECKQCGKAFSCSSYIRIHKRTHTGEKPYECKECGKAFIYPTSFQGHMRMHTGEKPYKCKECGKAFSLHSSFQRHTRIHNYEKPLECKQCGKAFSVSTSLKKHMRMHNR.

The KRAB domain occupies 4–90; it reads VAFEDVSVSF…AENFSPNLSV (87 aa). C2H2-type zinc fingers lie at residues 100–122, 132–154, 160–182, 188–210, 216–238, 244–266, 272–294, 300–322, 328–350, 356–378, 384–406, 412–434, 440–462, 468–490, 496–518, 524–546, and 552–574; these read YECTICGKAFMRLSSLTRHMRSH, YKCKECEKAFSYLKSFQRHERSH, YKCKQCGKTFIYHQPFQRHERTH, YECKQCGKALSCSSSLRVHERIH, YECKQCGKAFSCSSSIRVHERTH, YACKECGKAFISHTSVLTHMITH, YKCKECGKAFIFPSFLRVHERIH, YKCKQCGKAFRCSTSIQIHERIH, YKCKECGKSFSARPAFRVHVRVH, YKCKECGKAFSRISYFRIHERTH, YECKKCGKTFNYPLDLKIHKRNH, YECKECAKTFISLENFRRHMITH, YKCRDCGKVFIFPSALRTHERTH, YECKQCGKAFSCSSYIRIHKRTH, YECKECGKAFIYPTSFQGHMRMH, YKCKECGKAFSLHSSFQRHTRIH, and LECKQCGKAFSVSTSLKKHMRMH.

This sequence belongs to the krueppel C2H2-type zinc-finger protein family.

The protein resides in the nucleus. Functionally, may be involved in transcriptional regulation. This Homo sapiens (Human) protein is Zinc finger protein 791 (ZNF791).